The chain runs to 342 residues: Anthranilate phosphoribosyltransferase (342 aa).

Residues glycine 83, glycine 86 to aspartate 87, threonine 91, asparagine 93 to threonine 96, lysine 111 to glycine 119, and serine 123 contribute to the 5-phospho-alpha-D-ribose 1-diphosphate site. Glycine 83 lines the anthranilate pocket. Position 95 (serine 95) interacts with Mg(2+). Residue asparagine 114 participates in anthranilate binding. Arginine 169 contacts anthranilate. 2 residues coordinate Mg(2+): aspartate 228 and glutamate 229.

This sequence belongs to the anthranilate phosphoribosyltransferase family. In terms of assembly, homodimer. Mg(2+) is required as a cofactor.

It carries out the reaction N-(5-phospho-beta-D-ribosyl)anthranilate + diphosphate = 5-phospho-alpha-D-ribose 1-diphosphate + anthranilate. Its pathway is amino-acid biosynthesis; L-tryptophan biosynthesis; L-tryptophan from chorismate: step 2/5. Its function is as follows. Catalyzes the transfer of the phosphoribosyl group of 5-phosphorylribose-1-pyrophosphate (PRPP) to anthranilate to yield N-(5'-phosphoribosyl)-anthranilate (PRA). In Halorhodospira halophila (strain DSM 244 / SL1) (Ectothiorhodospira halophila (strain DSM 244 / SL1)), this protein is Anthranilate phosphoribosyltransferase.